Here is a 230-residue protein sequence, read N- to C-terminus: uncharacterized protein (230 aa).

It belongs to the transferase hexapeptide repeat family.

This is an uncharacterized protein from Escherichia coli (strain K12).